The chain runs to 191 residues: Large ribosomal subunit protein uL5 (191 aa).

Belongs to the universal ribosomal protein uL5 family. As to quaternary structure, part of the 50S ribosomal subunit; part of the 5S rRNA/L5/L18/L25 subcomplex. Contacts the 5S rRNA and the P site tRNA. Forms a bridge to the 30S subunit in the 70S ribosome.

Its function is as follows. This is one of the proteins that bind and probably mediate the attachment of the 5S RNA into the large ribosomal subunit, where it forms part of the central protuberance. In the 70S ribosome it contacts protein S13 of the 30S subunit (bridge B1b), connecting the 2 subunits; this bridge is implicated in subunit movement. Contacts the P site tRNA; the 5S rRNA and some of its associated proteins might help stabilize positioning of ribosome-bound tRNAs. The protein is Large ribosomal subunit protein uL5 of Micrococcus luteus (strain ATCC 4698 / DSM 20030 / JCM 1464 / CCM 169 / CCUG 5858 / IAM 1056 / NBRC 3333 / NCIMB 9278 / NCTC 2665 / VKM Ac-2230) (Micrococcus lysodeikticus).